We begin with the raw amino-acid sequence, 116 residues long: Large ribosomal subunit protein bL19 (116 aa).

This sequence belongs to the bacterial ribosomal protein bL19 family.

Functionally, this protein is located at the 30S-50S ribosomal subunit interface and may play a role in the structure and function of the aminoacyl-tRNA binding site. The polypeptide is Large ribosomal subunit protein bL19 (Clostridioides difficile (strain 630) (Peptoclostridium difficile)).